Consider the following 76-residue polypeptide: ATP synthase subunit 9, mitochondrial (76 aa).

M1 bears the N-formylmethionine mark. Transmembrane regions (helical) follow at residues 14-34 (IATI…AALI) and 52-72 (ILGF…SFLL).

As to quaternary structure, F-type ATP synthases have 2 components, the catalytic core F(1) and the membrane-embedded component F(0), linked together by a central stalk and a peripheral stalk. The central stalk, also called rotor shaft, is often seen as part of F(1). The peripheral stalk is seen as part of F(0). F(0) contains the membrane channel next to the rotor. F-type ATP synthases form dimers but each monomer functions independently in ATP generation. The dimer consists of 18 different polypeptides: ATP1 (subunit alpha, part of F(1), 3 molecules per monomer), ATP2 (subunit beta, part of F(1), 3 molecules per monomer), ATP3 (subunit gamma, part of the central stalk), ATP4 (subunit b, part of the peripheral stalk), ATP5/OSCP (subunit 5/OSCP, part of the peripheral stalk), ATP6 (subunit a, part of the peripheral stalk), ATP7 (subunit d, part of the peripheral stalk), ATP8 (subunit 8, part of the peripheral stalk), OLI1 (subunit c, part of the rotor, 10 molecules per monomer), ATP14 (subunit h, part of the peripheral stalk), ATP15 (subunit epsilon, part of the central stalk), ATP16 (subunit delta, part of the central stalk), ATP17 (subunit f, part of the peripheral stalk), ATP18 (subunit i/j, part of the peripheral stalk). Dimer-specific subunits are ATP19 (subunit k, at interface between monomers), ATP20 (subunit g, at interface between monomers), TIM11 (subunit e, at interface between monomers). Also contains subunit L.

It is found in the mitochondrion inner membrane. Its function is as follows. Mitochondrial membrane ATP synthase (F(1)F(0) ATP synthase or Complex V) produces ATP from ADP in the presence of a proton gradient across the membrane which is generated by electron transport complexes of the respiratory chain. F-type ATP synthases consist of two structural domains, F(1) - containing the extramembraneous catalytic core, and F(0) - containing the membrane proton channel, linked together by a central stalk and a peripheral stalk. During catalysis, ATP synthesis in the catalytic domain of F(1) is coupled via a rotary mechanism of the central stalk subunits to proton translocation. Part of the complex F(0) domain. A homomeric c-ring of 10 OLI1/ATP9 subunits is part of the complex rotary element. This Pichia angusta (Yeast) protein is ATP synthase subunit 9, mitochondrial.